The primary structure comprises 357 residues: Glutamine synthetase cytosolic isozyme (357 aa).

A GS beta-grasp domain is found at 20 to 100 (VIAEYIWIGG…VICDAYSPNG (81 aa)). The GS catalytic domain occupies 107-357 (KRAAAAKIFN…IAETTILWKP (251 aa)).

Belongs to the glutamine synthetase family. In terms of assembly, homooctamer.

It is found in the cytoplasm. The enzyme catalyses L-glutamate + NH4(+) + ATP = L-glutamine + ADP + phosphate + H(+). The chain is Glutamine synthetase cytosolic isozyme from Pinus sylvestris (Scotch pine).